A 298-amino-acid polypeptide reads, in one-letter code: Ethanolamine ammonia-lyase small subunit (298 aa).

The segment at methionine 1 to glutamine 19 is targets protein to the BMC. Residues valine 210, glutamate 231, and cysteine 261 each contribute to the adenosylcob(III)alamin site.

This sequence belongs to the EutC family. As to quaternary structure, the basic unit is a heterodimer which dimerizes to form tetramers. The heterotetramers trimerize; 6 large subunits form a core ring with 6 small subunits projecting outwards. Interacts with EutS, which targets it to the interior of the BMC. Adenosylcob(III)alamin is required as a cofactor.

It is found in the bacterial microcompartment. The catalysed reaction is ethanolamine = acetaldehyde + NH4(+). It participates in amine and polyamine degradation; ethanolamine degradation. Functionally, catalyzes the deamination of various vicinal amino-alcohols to oxo compounds. It is spontaneously inactivated by its substrate and reactivated by EutA. May play a role in bacterial microcompartment (BMC) assembly or maintenance. Directly targeted to the BMC. In terms of biological role, expression of the eut operon allows this bacteria to use ethanolamine (EA) as a carbon, nitrogen and energy source. It relies on cobalamin (vitamin B12) both as a cofactor for the ethanolamine ammonia-lyase activity and to induce the operon. EA enhances bacterial survival in macrophages in a concentration-dependent manner, suggesting it is an important nutrient during infection. This is Ethanolamine ammonia-lyase small subunit from Salmonella typhimurium (strain LT2 / SGSC1412 / ATCC 700720).